The chain runs to 239 residues: Ribosomal RNA small subunit methyltransferase G (239 aa).

S-adenosyl-L-methionine contacts are provided by residues Gly-76, Phe-81, 99–101, 128–129, and Arg-147; these read DSS and IE.

This sequence belongs to the methyltransferase superfamily. RNA methyltransferase RsmG family.

It localises to the cytoplasm. Functionally, specifically methylates the N7 position of a guanine in 16S rRNA. The chain is Ribosomal RNA small subunit methyltransferase G from Prochlorococcus marinus (strain MIT 9515).